Consider the following 346-residue polypeptide: MKTLQELTRPNIWKLKPYSSARDEYKGAVASVFLDANENPYNLPHNRYPDPMQWELKTLLSKIKKVSPQHIFLGNGSDEAIDLVFRAFCEPEKDNVVAIDPTYGMYQVCADVNNVEYRKVLLDENFQFSAEKLLAATDERTKLIFLCSPNNPTGNDLLRSEIEKILREFEGLVILDEAYNDFSEAPSFLEELDKYPNLVVFQTFSKAWGCAAIRLGMAFASEAIIGILSKIKYPYNVNQLTQQQAIAMLHKYYEIERWIKTLKEERDYLEEEFAKLSCTVRMYPSDSNFFLAKVTDAVKIYNYLVGEGIIVRNRHSISLCCNCLRVTVGTRVENNTLLAALKKYQG.

K206 bears the N6-(pyridoxal phosphate)lysine mark.

Belongs to the class-II pyridoxal-phosphate-dependent aminotransferase family. Histidinol-phosphate aminotransferase subfamily. In terms of assembly, homodimer. Pyridoxal 5'-phosphate is required as a cofactor.

The catalysed reaction is L-histidinol phosphate + 2-oxoglutarate = 3-(imidazol-4-yl)-2-oxopropyl phosphate + L-glutamate. It functions in the pathway amino-acid biosynthesis; L-histidine biosynthesis; L-histidine from 5-phospho-alpha-D-ribose 1-diphosphate: step 7/9. The chain is Histidinol-phosphate aminotransferase from Bacteroides thetaiotaomicron (strain ATCC 29148 / DSM 2079 / JCM 5827 / CCUG 10774 / NCTC 10582 / VPI-5482 / E50).